We begin with the raw amino-acid sequence, 1177 residues long: DNA-directed RNA polymerase subunit beta' (1177 aa).

Zn(2+) contacts are provided by Cys60, Cys62, Cys75, and Cys78. The Mg(2+) site is built by Asp450, Asp452, and Asp454. Zn(2+) is bound by residues Cys795, Cys869, Cys876, and Cys879.

The protein belongs to the RNA polymerase beta' chain family. In terms of assembly, the RNAP catalytic core consists of 2 alpha, 1 beta, 1 beta' and 1 omega subunit. When a sigma factor is associated with the core the holoenzyme is formed, which can initiate transcription. Requires Mg(2+) as cofactor. Zn(2+) serves as cofactor.

The catalysed reaction is RNA(n) + a ribonucleoside 5'-triphosphate = RNA(n+1) + diphosphate. Its function is as follows. DNA-dependent RNA polymerase catalyzes the transcription of DNA into RNA using the four ribonucleoside triphosphates as substrates. This chain is DNA-directed RNA polymerase subunit beta', found in Clostridium botulinum (strain Eklund 17B / Type B).